We begin with the raw amino-acid sequence, 389 residues long: MKWMVVALVCLQLLEAKVTKVTLKKFKSIRENLREQGLLEDFLKTNHYDPAQKYHFGDFSVAYEPMAYMDASYFGEISIGTPPQNFLVLFDTGSSNLWVPSVYCQSQACTGHARFNPNQSSTYSTNGQTFSLQYGSGSLTGFFGYDTMTVQNIKVPHQEFGLSQNEPGTNFIYAQFDGIMGMAYPSLAMGGATTALQGMLQEGALTSPVFSFYLSNQQGSQNGGAVIFGGVDNSLYTGQIFWAPVTQELYWQIGVEEFLIGGQATGWCQQGCQAIVDTGTSLLTVPQQFMSALQQATGAQQDQYGQLAVNCNSIQSLPTLTFIINGVQFPLPPSAYVLNTNGYCFLGVEPTYLPSQNGQPLWILGDVFLRSYYSVYDMGNNRVGFATAA.

Positions 1-16 (MKWMVVALVCLQLLEA) are cleaved as a signal peptide. Positions 17–59 (KVTKVTLKKFKSIRENLREQGLLEDFLKTNHYDPAQKYHFGDF) are cleaved as a propeptide — activation peptide. A Peptidase A1 domain is found at 73 to 386 (YFGEISIGTP…DMGNNRVGFA (314 aa)). Residue D91 is part of the active site. 2 cysteine pairs are disulfide-bonded: C104–C109 and C268–C272. D277 is a catalytic residue. Residues C311 and C344 are joined by a disulfide bond.

It belongs to the peptidase A1 family.

It is found in the secreted. It catalyses the reaction More restricted specificity than pepsin A, but shows preferential cleavage at Tyr-|-Xaa bonds. High activity on hemoglobin.. In terms of biological role, hydrolyzes a variety of proteins. The sequence is that of Gastricsin (PGC) from Suncus murinus (Asian house shrew).